The chain runs to 182 residues: ATP synthase subunit delta (182 aa).

This sequence belongs to the ATPase delta chain family. In terms of assembly, F-type ATPases have 2 components, F(1) - the catalytic core - and F(0) - the membrane proton channel. F(1) has five subunits: alpha(3), beta(3), gamma(1), delta(1), epsilon(1). F(0) has three main subunits: a(1), b(2) and c(10-14). The alpha and beta chains form an alternating ring which encloses part of the gamma chain. F(1) is attached to F(0) by a central stalk formed by the gamma and epsilon chains, while a peripheral stalk is formed by the delta and b chains.

It localises to the cell inner membrane. In terms of biological role, f(1)F(0) ATP synthase produces ATP from ADP in the presence of a proton or sodium gradient. F-type ATPases consist of two structural domains, F(1) containing the extramembraneous catalytic core and F(0) containing the membrane proton channel, linked together by a central stalk and a peripheral stalk. During catalysis, ATP synthesis in the catalytic domain of F(1) is coupled via a rotary mechanism of the central stalk subunits to proton translocation. This protein is part of the stalk that links CF(0) to CF(1). It either transmits conformational changes from CF(0) to CF(1) or is implicated in proton conduction. This is ATP synthase subunit delta from Cytophaga hutchinsonii (strain ATCC 33406 / DSM 1761 / CIP 103989 / NBRC 15051 / NCIMB 9469 / D465).